The following is a 249-amino-acid chain: Proteasome subunit alpha 2 (249 aa).

At Met-1 the chain carries N-acetylmethionine.

Belongs to the peptidase T1A family. As to quaternary structure, the 20S proteasome core is composed of 14 alpha and 14 beta subunits that assemble into four stacked heptameric rings, resulting in a barrel-shaped structure. The two inner rings, each composed of seven catalytic beta subunits, are sandwiched by two outer rings, each composed of seven alpha subunits. H.volcanii produces at least 2 types of 20S proteasomes: an alpha1-beta proteasome and a proteasome containing all three subunits (alpha1, alpha2, and beta) that appears to be asymmetrical with homo-oligomeric alpha1 and alpha2 rings positioned on separate ends. The catalytic chamber with the active sites is on the inside of the barrel. Has probably a gated structure, the ends of the cylinder being occluded by the N-termini of the alpha-subunits. Is likely capped at one or both ends by the proteasome regulatory ATPase, PAN.

It localises to the cytoplasm. With respect to regulation, the formation of the proteasomal ATPase PAN-20S proteasome complex, via the docking of the C-termini of PAN into the intersubunit pockets in the alpha-rings, triggers opening of the gate for substrate entry. Interconversion between the open-gate and close-gate conformations leads to a dynamic regulation of the 20S proteasome proteolysis activity. Its function is as follows. Component of the proteasome core, a large protease complex with broad specificity involved in protein degradation. The H.volcanii alpha1-beta-alpha2 proteasome is able to cleave oligopeptides after Tyr and thus displays chymotrypsin-like activity. This chain is Proteasome subunit alpha 2, found in Haloferax volcanii (strain ATCC 29605 / DSM 3757 / JCM 8879 / NBRC 14742 / NCIMB 2012 / VKM B-1768 / DS2) (Halobacterium volcanii).